The chain runs to 452 residues: Elongation factor Tu, mitochondrial (452 aa).

The N-terminal 43 residues, methionine 1–leucine 43, are a transit peptide targeting the mitochondrion. Positions lysine 55 to threonine 251 constitute a tr-type G domain. Residues glycine 64–threonine 71 are G1. 5 residues coordinate GTP: aspartate 67, glycine 69, lysine 70, threonine 71, and threonine 72. A Mg(2+)-binding site is contributed by threonine 71. N6-acetyllysine is present on lysine 79. Residue lysine 88 is modified to N6-acetyllysine; alternate. Position 88 is an N6-succinyllysine; alternate (lysine 88). The tract at residues glycine 105–asparagine 109 is G2. Residues aspartate 126–glycine 129 are G3. Residues asparagine 181, aspartate 184, serine 219, alanine 220, and leucine 221 each coordinate GTP. Residues asparagine 181–aspartate 184 are G4. Residues serine 219–leucine 221 are G5. Lysine 234 bears the N6-succinyllysine mark. Lysine 256 carries the N6-acetyllysine modification. A Phosphothreonine modification is found at threonine 278. Lysine 286 bears the N6-succinyllysine mark. At serine 312 the chain carries Phosphoserine. N6-acetyllysine occurs at positions 361 and 418.

It belongs to the TRAFAC class translation factor GTPase superfamily. Classic translation factor GTPase family. EF-Tu/EF-1A subfamily. As to quaternary structure, interacts with NLRX1. Interacts with ATG16L1.

It is found in the mitochondrion. The enzyme catalyses GTP + H2O = GDP + phosphate + H(+). Its function is as follows. GTP hydrolase that promotes the GTP-dependent binding of aminoacyl-tRNA to the A-site of ribosomes during protein biosynthesis. Plays a role in the regulation of autophagy and innate immunity. Recruits ATG5-ATG12 and NLRX1 at mitochondria and serves as a checkpoint of the RIGI-MAVS pathway. In turn, inhibits RLR-mediated type I interferon while promoting autophagy. The protein is Elongation factor Tu, mitochondrial of Rattus norvegicus (Rat).